Reading from the N-terminus, the 504-residue chain is SPbeta prophage-derived uncharacterized protein YorI (504 aa).

This Bacillus subtilis (strain 168) protein is SPbeta prophage-derived uncharacterized protein YorI (yorI).